Here is a 158-residue protein sequence, read N- to C-terminus: SsrA-binding protein (158 aa).

Belongs to the SmpB family.

Its subcellular location is the cytoplasm. Its function is as follows. Required for rescue of stalled ribosomes mediated by trans-translation. Binds to transfer-messenger RNA (tmRNA), required for stable association of tmRNA with ribosomes. tmRNA and SmpB together mimic tRNA shape, replacing the anticodon stem-loop with SmpB. tmRNA is encoded by the ssrA gene; the 2 termini fold to resemble tRNA(Ala) and it encodes a 'tag peptide', a short internal open reading frame. During trans-translation Ala-aminoacylated tmRNA acts like a tRNA, entering the A-site of stalled ribosomes, displacing the stalled mRNA. The ribosome then switches to translate the ORF on the tmRNA; the nascent peptide is terminated with the 'tag peptide' encoded by the tmRNA and targeted for degradation. The ribosome is freed to recommence translation, which seems to be the essential function of trans-translation. The chain is SsrA-binding protein from Glaesserella parasuis serovar 5 (strain SH0165) (Haemophilus parasuis).